Here is an 858-residue protein sequence, read N- to C-terminus: Putative glutamate--cysteine ligase 2-3 (858 aa).

The tract at residues 1-372 is carboxylate-amine ligase; sequence MSDARNVAVG…RDVPPAGASL (372 aa). Positions 373–858 are unknown; sequence GVAPAVSAPD…GSKDTWIPRR (486 aa).

In the N-terminal section; belongs to the glutamate--cysteine ligase type 2 family. YbdK subfamily.

It carries out the reaction L-cysteine + L-glutamate + ATP = gamma-L-glutamyl-L-cysteine + ADP + phosphate + H(+). In terms of biological role, ATP-dependent carboxylate-amine ligase which exhibits weak glutamate--cysteine ligase activity. The polypeptide is Putative glutamate--cysteine ligase 2-3 (Frankia alni (strain DSM 45986 / CECT 9034 / ACN14a)).